The sequence spans 311 residues: Methionyl-tRNA formyltransferase (311 aa).

(6S)-5,6,7,8-tetrahydrofolate is bound at residue 110-113; that stretch reads SLLP.

This sequence belongs to the Fmt family.

The catalysed reaction is L-methionyl-tRNA(fMet) + (6R)-10-formyltetrahydrofolate = N-formyl-L-methionyl-tRNA(fMet) + (6S)-5,6,7,8-tetrahydrofolate + H(+). Its function is as follows. Attaches a formyl group to the free amino group of methionyl-tRNA(fMet). The formyl group appears to play a dual role in the initiator identity of N-formylmethionyl-tRNA by promoting its recognition by IF2 and preventing the misappropriation of this tRNA by the elongation apparatus. The polypeptide is Methionyl-tRNA formyltransferase (Streptococcus equi subsp. equi (strain 4047)).